Consider the following 104-residue polypeptide: MKLFSCLMALLLFLLQAVPGLGLPRDTSRCVGYHGYCIRSKVCPKPFAAFGTCSWRQKTCCVDTTSDFHTCQDKGGHCVSPKIRCLEEQLGLCPLKRWTCCKEI.

A signal peptide spans 1-22 (MKLFSCLMALLLFLLQAVPGLG). 3 disulfides stabilise this stretch: Cys30–Cys60, Cys37–Cys53, and Cys43–Cys61.

Belongs to the beta-defensin family. Detected in outer membrane of the vitelline layer of the egg (at protein level). Expressed in the liver, gall bladder, kidney, testis, ovary and male and female reproductive tracts. Expressed in the ovarian stroma, but not in the ovarian follicles. No expression is detected in bone marrow.

It is found in the secreted. It localises to the cytoplasmic granule. Its function is as follows. Has bactericidal activity. This chain is Gallinacin-11 (GAL11), found in Gallus gallus (Chicken).